Reading from the N-terminus, the 64-residue chain is Large ribosomal subunit protein bL35 (64 aa).

The protein belongs to the bacterial ribosomal protein bL35 family.

This is Large ribosomal subunit protein bL35 from Vibrio parahaemolyticus serotype O3:K6 (strain RIMD 2210633).